We begin with the raw amino-acid sequence, 176 residues long: Inorganic pyrophosphatase (176 aa).

Substrate contacts are provided by Lys-30, Arg-44, and Tyr-56. Residues Asp-66, Asp-71, and Asp-103 each coordinate Mg(2+). Tyr-142 is a substrate binding site.

This sequence belongs to the PPase family. In terms of assembly, homohexamer. Mg(2+) serves as cofactor.

It is found in the cytoplasm. It catalyses the reaction diphosphate + H2O = 2 phosphate + H(+). Catalyzes the hydrolysis of inorganic pyrophosphate (PPi) forming two phosphate ions. This Vibrio cholerae serotype O1 (strain ATCC 39315 / El Tor Inaba N16961) protein is Inorganic pyrophosphatase.